The sequence spans 196 residues: MARTAEVVRETKETQIRVWIDLDGTGASTISTGIGFYDHMLESFARHGGFDLKVETKGDLHIDMHHTVEDTGIVLGQAIKEALDGFKGVRRFGHAYIPMDETLTRCAIDLSNRPYLIWKVDFKRPKVGEMDTELFKEFHHAFAMNVGACVHLETLYGDNTHHVAESGFKALARALRQAVEIDPKTGGHAPSTKGVL.

Belongs to the imidazoleglycerol-phosphate dehydratase family.

The protein localises to the cytoplasm. It catalyses the reaction D-erythro-1-(imidazol-4-yl)glycerol 3-phosphate = 3-(imidazol-4-yl)-2-oxopropyl phosphate + H2O. It participates in amino-acid biosynthesis; L-histidine biosynthesis; L-histidine from 5-phospho-alpha-D-ribose 1-diphosphate: step 6/9. This chain is Imidazoleglycerol-phosphate dehydratase, found in Caulobacter sp. (strain K31).